Here is a 28-residue protein sequence, read N- to C-terminus: ALWKNMLKGIGKLAGQAALGAVKTLVGA.

In terms of tissue distribution, expressed by the skin glands.

The protein resides in the secreted. Functionally, has antimicrobial activity. The polypeptide is Dermaseptin-6TR (Phyllomedusa trinitatis (Trinidad leaf frog)).